The sequence spans 215 residues: WAT1-related protein At3g28060 (215 aa).

5 consecutive transmembrane segments (helical) span residues 48-68, 82-102, 117-137, 146-166, and 176-196; these read IIIG…AVAY, FALA…VSLF, IMLI…VVES, VFLA…GAIF, and VIGG…FHIA. Residues 65–186 form the EamA domain; it reads AVAYIVQTHI…IGGTLISIGF (122 aa).

Belongs to the drug/metabolite transporter (DMT) superfamily. Plant drug/metabolite exporter (P-DME) (TC 2.A.7.4) family.

It localises to the membrane. This is WAT1-related protein At3g28060 from Arabidopsis thaliana (Mouse-ear cress).